The primary structure comprises 115 residues: Histidine decarboxylase proenzyme (115 aa).

A Pyruvic acid (Ser) modification is found at Ser83.

As to quaternary structure, the proenzyme is a hexamer of identical pi chains; each pi chain monomer is cleaved to form a small (or beta) chain and a large (or alpha) chain by non-hydrolytic self-catalysis. Pyruvate is required as a cofactor.

It carries out the reaction L-histidine + H(+) = histamine + CO2. The chain is Histidine decarboxylase proenzyme from Lentilactobacillus buchneri (Lactobacillus buchneri).